Consider the following 394-residue polypeptide: Guanine nucleotide-binding protein G(s) subunit alpha isoforms short (394 aa).

The interval 1-23 (MGCLGNSKTEDQRNEEKAQREAN) is disordered. Residue G2 is the site of N-palmitoyl glycine attachment. C3 is lipidated: S-palmitoyl cysteine. A compositionally biased stretch (basic and acidic residues) spans 8–23 (KTEDQRNEEKAQREAN). The region spanning 39–394 (ATHRLLLLGA…RMHLRQYELL (356 aa)) is the G-alpha domain. Residues 42-55 (RLLLLGAGESGKST) form a G1 motif region. 47–55 (GAGESGKST) contributes to the GTP binding site. Residue S54 participates in Mg(2+) binding. Residues 68–90 (FNGEGGEEDPQAARSNSDGEKAT) form a disordered region. Residues 196-204 (DLLRCRVLT) are G2 motif. Residues 197 to 204 (LLRCRVLT), 223 to 227 (DVGGQ), and 292 to 295 (NKQD) contribute to the GTP site. T204 is a Mg(2+) binding site. A G3 motif region spans residues 219 to 228 (FHMFDVGGQR). The tract at residues 288–295 (ILFLNKQD) is G4 motif. K300 is covalently cross-linked (Glycyl lysine isopeptide (Lys-Gly) (interchain with G-Cter in ubiquitin)). At S352 the chain carries Phosphoserine. The segment at 364–369 (TCAVDT) is G5 motif. A366 serves as a coordination point for GTP.

This sequence belongs to the G-alpha family. G(s) subfamily. Heterotrimeric G proteins are composed of 3 units; alpha, beta and gamma. The alpha chain contains the guanine nucleotide binding site. Component of the TAS2R14-GNAS2 complex, consisting of TAS2R14, GNAS2, GNB1 and GNG2; within the complex interacts with TAS2R14; this complex plays a role in the perception of bitterness. Interacts with CRY1; the interaction may block GPCR-mediated regulation of cAMP concentrations. Interacts with ADCY6 and stimulates its adenylyl cyclase activity. Interacts with ADCY2 and ADCY5. Interacts (GDP-bound form) with RIC8B; promoting GNAS folding and association with the plasma membrane. Stimulates the ADCY5 adenylyl cyclase activity. Interaction with SASH1. Interacts with GASL2L2.

The protein resides in the cell membrane. It carries out the reaction GTP + H2O = GDP + phosphate + H(+). Functionally, guanine nucleotide-binding proteins (G proteins) function as transducers in numerous signaling pathways controlled by G protein-coupled receptors (GPCRs). The alpha chain contains the guanine nucleotide binding site and alternates between an active, GTP-bound state and an inactive, GDP-bound state. Signaling by an activated GPCR promotes GDP release and GTP binding. The alpha subunit has a low GTPase activity that converts bound GTP to GDP, thereby terminating the signal. Both GDP release and GTP hydrolysis are modulated by numerous regulatory proteins. Signaling involves the activation of adenylyl cyclases, resulting in increased levels of the signaling molecule cAMP. Functions downstream of beta-adrenergic receptors. Stimulates the Ras signaling pathway via RAPGEF2. This is Guanine nucleotide-binding protein G(s) subunit alpha isoforms short (Gnas) from Mus musculus (Mouse).